A 174-amino-acid polypeptide reads, in one-letter code: Endoribonuclease YbeY (174 aa).

Positions 129, 133, and 139 each coordinate Zn(2+).

The protein belongs to the endoribonuclease YbeY family. It depends on Zn(2+) as a cofactor.

It is found in the cytoplasm. Its function is as follows. Single strand-specific metallo-endoribonuclease involved in late-stage 70S ribosome quality control and in maturation of the 3' terminus of the 16S rRNA. The polypeptide is Endoribonuclease YbeY (Lactobacillus delbrueckii subsp. bulgaricus (strain ATCC 11842 / DSM 20081 / BCRC 10696 / JCM 1002 / NBRC 13953 / NCIMB 11778 / NCTC 12712 / WDCM 00102 / Lb 14)).